The sequence spans 164 residues: Kunitz-type trypsin inhibitor BrTI (164 aa).

It belongs to the leguminous Kunitz-type inhibitor family.

In terms of biological role, inhibitor of trypsin and human plasma kallikrein with a Ki of 2.9 nM and 14.0 nM, respectively. Does not inhibit chymotrypsin, porcine pancreatic elastas, human neutrophil elastase, coagulation factor Xa, human thrombin, porcine pancreatic kallikrein or plasmin. The protein is Kunitz-type trypsin inhibitor BrTI of Bauhinia rufa (Orchid tree).